We begin with the raw amino-acid sequence, 306 residues long: Non-specific ribonucleoside hydrolase RihC (306 aa).

His235 is an active-site residue.

Belongs to the IUNH family. RihC subfamily.

Hydrolyzes both purine and pyrimidine ribonucleosides with a broad-substrate specificity. In Salmonella schwarzengrund (strain CVM19633), this protein is Non-specific ribonucleoside hydrolase RihC.